The sequence spans 189 residues: Probable nicotinate-nucleotide adenylyltransferase (189 aa).

It belongs to the NadD family.

The catalysed reaction is nicotinate beta-D-ribonucleotide + ATP + H(+) = deamido-NAD(+) + diphosphate. Its pathway is cofactor biosynthesis; NAD(+) biosynthesis; deamido-NAD(+) from nicotinate D-ribonucleotide: step 1/1. Its function is as follows. Catalyzes the reversible adenylation of nicotinate mononucleotide (NaMN) to nicotinic acid adenine dinucleotide (NaAD). The chain is Probable nicotinate-nucleotide adenylyltransferase from Bacillus cereus (strain G9842).